We begin with the raw amino-acid sequence, 361 residues long: uncharacterized protein (361 aa).

Gly-41–Thr-48 serves as a coordination point for ATP.

It belongs to the archaeal ATPase family.

This is an uncharacterized protein from Methanocaldococcus jannaschii (strain ATCC 43067 / DSM 2661 / JAL-1 / JCM 10045 / NBRC 100440) (Methanococcus jannaschii).